The chain runs to 245 residues: Large ribosomal subunit protein eL29 (245 aa).

Residues 1 to 26 (MAKSKNHTTHNQSRKWHRNGIKKPRS) show a composition bias toward basic residues. 2 disordered regions span residues 1 to 33 (MAKS…ESLK) and 114 to 245 (RGLR…AKAP). Lys-5 carries the post-translational modification N6-methyllysine. A Phosphoserine modification is found at Ser-31. Residue Lys-33 is modified to N6-acetyllysine. A compositionally biased stretch (low complexity) spans 134–150 (KGKVKAQIKAQAQAQIK). Basic and acidic residues predominate over residues 157–171 (AQAETKPKAQAETKP). Low complexity-rich tracts occupy residues 172–226 (KAQA…ATPA) and 234–245 (PPKGAQPPAKAP).

It belongs to the eukaryotic ribosomal protein eL29 family. In terms of assembly, component of the large ribosomal subunit.

It is found in the cytoplasm. Its function is as follows. Component of the large ribosomal subunit. The ribosome is a large ribonucleoprotein complex responsible for the synthesis of proteins in the cell. This is Large ribosomal subunit protein eL29 (RPL29) from Oryctolagus cuniculus (Rabbit).